A 50-amino-acid chain; its full sequence is ILKKDNYSYISFYNALIHEGYKDLAALLHSGIPVISSSNGGKDSVGGITS.

The CARD domain occupies 1–31; it reads ILKKDNYSYISFYNALIHEGYKDLAALLHSG. Residues 46–50 form the NB-ARC domain; that stretch reads GGITS.

As to quaternary structure, monomer. Oligomerizes to a heptameric ring, known as the apoptosome, upon binding of cytochrome c and dATP. Oligomeric Apaf-1 and pro-caspase-9 bind to each other via their respective NH2-terminal CARD domains and consecutively mature caspase-9 is released from the complex. Interacts with APIP. Interacts (via CARD and NACHT domains) with NAIP/BIRC1 (via NACHT domain). Interacts with CIAO2A.

Its function is as follows. Oligomeric Apaf-1 mediates the cytochrome c-dependent autocatalytic activation of pro-caspase 9 (Apaf-3), leading to the activation of caspase-3 and apoptosis. This activation requires ATP. The sequence is that of Apoptotic protease-activating factor 1 (APAF1) from Canis lupus familiaris (Dog).